Reading from the N-terminus, the 616-residue chain is Replication protein A 70 kDa DNA-binding subunit (616 aa).

Met1 bears the N-acetylmethionine mark. Residues Lys22 and Lys88 each participate in a glycyl lysine isopeptide (Lys-Gly) (interchain with G-Cter in ubiquitin) cross-link. The tract at residues 121-155 (GLGQPQVAPPAPAASPAASSRPQPQNGTSGAGSTV) is disordered. The segment covering 134–145 (ASPAASSRPQPQ) has biased composition (low complexity). The segment covering 146-155 (NGTSGAGSTV) has biased composition (polar residues). N6-acetyllysine; alternate is present on residues Lys163 and Lys167. Residues Lys163 and Lys167 each participate in a glycyl lysine isopeptide (Lys-Gly) (interchain with G-Cter in ubiquitin); alternate cross-link. The residue at position 180 (Thr180) is a Phosphothreonine. Lys183 participates in a covalent cross-link: Glycyl lysine isopeptide (Lys-Gly) (interchain with G-Cter in ubiquitin). Thr191 is modified (phosphothreonine). A DNA-binding region (OB) is located at residues 197-281 (WTICARVTNK…VKNDYEMTFN (85 aa)). Residues Lys220 and Lys244 each participate in a glycyl lysine isopeptide (Lys-Gly) (interchain with G-Cter in ubiquitin) cross-link. An N6-acetyllysine; alternate modification is found at Lys259. Lys259 participates in a covalent cross-link: Glycyl lysine isopeptide (Lys-Gly) (interchain with G-Cter in ubiquitin); alternate. Residues Lys267 and Lys331 each participate in a glycyl lysine isopeptide (Lys-Gly) (interchain with G-Cter in ubiquitin) cross-link. Phosphoserine is present on Ser384. Glycyl lysine isopeptide (Lys-Gly) (interchain with G-Cter in ubiquitin) cross-links involve residues Lys410 and Lys431. Lys449 is covalently cross-linked (Glycyl lysine isopeptide (Lys-Gly) (interchain with G-Cter in SUMO)). Residue Lys458 forms a Glycyl lysine isopeptide (Lys-Gly) (interchain with G-Cter in ubiquitin) linkage. The C4-type zinc-finger motif lies at 481–503 (CPTQDCNKKVIDQQNGLYRCEKC). Residue Lys553 forms a Glycyl lysine isopeptide (Lys-Gly) (interchain with G-Cter in ubiquitin) linkage. A Glycyl lysine isopeptide (Lys-Gly) (interchain with G-Cter in SUMO) cross-link involves residue Lys577.

This sequence belongs to the replication factor A protein 1 family. As to quaternary structure, component of the canonical replication protein A complex (RPA), a heterotrimer composed of RPA1, RPA2 and RPA3. The DNA-binding activity may reside exclusively on the RPA1 subunit. Interacts with PRPF19; the PRP19-CDC5L complex is recruited to the sites of DNA repair where it ubiquitinates the replication protein A complex (RPA). Interacts with RIPK1. Interacts with the polymerase alpha subunit POLA1/p180; this interaction stabilizes the replicative complex and reduces the misincorporation rate of DNA polymerase alpha by acting as a fidelity clamp. Interacts with RAD51 and SENP6 to regulate DNA repair. Interacts with HELB; this interaction promotes HELB recruitment to chromatin following DNA damage. Interacts with PRIMPOL; leading to recruit PRIMPOL on chromatin and stimulate its DNA primase activity. Interacts with XPA; the interaction is direct and associates XPA with the RPA complex. Interacts with ETAA1; the interaction is direct and promotes ETAA1 recruitment at stalled replication forks. Interacts with RPA1; this interaction associates HROB with the RPA complex. Interacts (when poly-ADP-ribosylated) with HTATSF1. Post-translationally, DNA damage-induced 'Lys-63'-linked polyubiquitination by PRPF19 mediates ATRIP recruitment to the RPA complex at sites of DNA damage and activation of ATR. Ubiquitinated by RFWD3 at stalled replication forks in response to DNA damage: ubiquitination by RFWD3 does not lead to degradation by the proteasome and promotes removal of the RPA complex from stalled replication forks, promoting homologous recombination. In terms of processing, sumoylated on lysine residues Lys-449 and Lys-577, with Lys-449 being the major site. Sumoylation promotes recruitment of RAD51 to the DNA damage foci to initiate DNA repair through homologous recombination. Desumoylated by SENP6. Poly-ADP-ribosylated by PARP1; promoting recruitment of HTATSF1.

The protein resides in the nucleus. It is found in the PML body. Its function is as follows. As part of the heterotrimeric replication protein A complex (RPA/RP-A), binds and stabilizes single-stranded DNA intermediates, that form during DNA replication or upon DNA stress. It prevents their reannealing and in parallel, recruits and activates different proteins and complexes involved in DNA metabolism. Thereby, it plays an essential role both in DNA replication and the cellular response to DNA damage. In the cellular response to DNA damage, the RPA complex controls DNA repair and DNA damage checkpoint activation. Through recruitment of ATRIP activates the ATR kinase a master regulator of the DNA damage response. It is required for the recruitment of the DNA double-strand break repair factors RAD51 and RAD52 to chromatin in response to DNA damage. Also recruits to sites of DNA damage proteins like XPA and XPG that are involved in nucleotide excision repair and is required for this mechanism of DNA repair. Also plays a role in base excision repair (BER) probably through interaction with UNG. Also recruits SMARCAL1/HARP, which is involved in replication fork restart, to sites of DNA damage. May also play a role in telomere maintenance. The protein is Replication protein A 70 kDa DNA-binding subunit (RPA1) of Pongo abelii (Sumatran orangutan).